A 1865-amino-acid polypeptide reads, in one-letter code: Dedicator of cytokinesis protein 1 (1865 aa).

The region spanning 9 to 70 is the SH3 domain; the sequence is REEKYGVAFY…PASYIHLKEA (62 aa). Residues 425–609 enclose the C2 DOCK-type domain; it reads RNDIYVTLVQ…DSFQISTLVC (185 aa). The 411-residue stretch at 1207–1617 folds into the DOCKER domain; sequence YKEIEREEMY…VEKQYGVRTM (411 aa). Residues 1613-1723 are disordered; the sequence is GVRTMPSGLD…FKPADSSLQQ (111 aa). Over residues 1639–1664 the composition is skewed to low complexity; it reads PSSSRPLSVASVSSFSSDSTPSRPGS. Over residues 1680–1694 the composition is skewed to basic and acidic residues; it reads RSQDKLDKDDPDKEK. The residue at position 1681 (serine 1681) is a Phosphoserine. Residues 1687-1695 form a phosphoinositide-binding region; the sequence is KDDPDKEKK. Positions 1695-1704 are enriched in basic residues; the sequence is KDKKKEKRNS. Over residues 1705–1716 the composition is skewed to basic and acidic residues; that stretch reads KHQEIFDKEFKP. Phosphoserine occurs at positions 1743, 1756, 1761, and 1764. Disordered regions lie at residues 1753-1778 and 1801-1865; these read RRFS…AKLS and PLPL…GIVQ. Low complexity predominate over residues 1756 to 1766; that stretch reads SVSPASPSSQQ. A phosphothreonine mark is found at threonine 1767 and threonine 1772. The tract at residues 1793-1819 is interaction with NCK2 second and third SH3 domain (minor); sequence MDVADVPPPLPLKGNMADYGNLMENQD. An SH3-binding; interaction with CRK motif is present at residues 1799-1805; the sequence is PPPLPLK. The tract at residues 1820–1836 is interaction with NCK2 third SH3 domain (major); the sequence is MMVSPTSPPPPPPQRQQ. The span at 1825-1851 shows a compositional bias: pro residues; sequence TSPPPPPPQRQQPPPLPSKTPPPPPPK. The tract at residues 1837 to 1852 is interaction with NCK2 (minor); it reads PPPLPSKTPPPPPPKT. The SH3-binding; interaction with CRK motif lies at 1838 to 1843; that stretch reads PPLPSK. Residue serine 1858 is modified to Phosphoserine.

The protein belongs to the DOCK family. As to quaternary structure, interacts with the SH3 domains of CRK and NCK2 via multiple sites. Interacts with nucleotide-free RAC1 via its DOCKER domain. Interacts with ELMO1, ELMO2 and probably ELMO3 via its SH3 domain. Interacts with RAC1. Interacts with ELMO1 and ADGRB1. Identified in a complex with AUTS2 and ELMO2.

The protein resides in the cytoplasm. The protein localises to the membrane. Functionally, involved in cytoskeletal rearrangements required for phagocytosis of apoptotic cells and cell motility. Along with DOCK1, mediates CRK/CRKL regulation of epithelial and endothelial cell spreading and migration on type IV collagen. Functions as a guanine nucleotide exchange factor (GEF), which activates Rac Rho small GTPases by exchanging bound GDP for free GTP. Its GEF activity may be enhanced by ELMO1. This Mus musculus (Mouse) protein is Dedicator of cytokinesis protein 1 (Dock1).